The following is a 261-amino-acid chain: Sepiapterin reductase (261 aa).

Position 1 is an N-acetylmethionine (M1). 14-20 lines the NADP(+) pocket; that stretch reads GASRGFG. The residue at position 32 (S32) is a Phosphoserine. NADP(+)-binding positions include 42–43 and 69–70; these read RN and DL. S103 bears the Phosphoserine mark. Substrate contacts are provided by residues 157-158 and Y170; that span reads SL. K174 is an NADP(+) binding site. G199 contributes to the substrate binding site. 201 to 206 contacts NADP(+); that stretch reads LDTDMQ. At S213 the chain carries Phosphoserine; by CaMK2; in vitro. D257 is a substrate binding site.

It belongs to the sepiapterin reductase family. Homodimer. Post-translationally, in vitro phosphorylation of Ser-213 by CaMK2 does not change kinetic parameters.

It is found in the cytoplasm. The catalysed reaction is L-erythro-7,8-dihydrobiopterin + NADP(+) = L-sepiapterin + NADPH + H(+). It catalyses the reaction (6R)-L-erythro-5,6,7,8-tetrahydrobiopterin + 2 NADP(+) = 6-pyruvoyl-5,6,7,8-tetrahydropterin + 2 NADPH + 2 H(+). Its function is as follows. Catalyzes the final one or two reductions in tetra-hydrobiopterin biosynthesis to form 5,6,7,8-tetrahydrobiopterin. The protein is Sepiapterin reductase (SPR) of Homo sapiens (Human).